Here is a 432-residue protein sequence, read N- to C-terminus: CinA-like protein (432 aa).

Belongs to the CinA family.

This Colwellia psychrerythraea (strain 34H / ATCC BAA-681) (Vibrio psychroerythus) protein is CinA-like protein.